A 434-amino-acid polypeptide reads, in one-letter code: Nicotinate phosphoribosyltransferase (434 aa).

H242 is modified (phosphohistidine; by autocatalysis).

This sequence belongs to the NAPRTase family. In terms of processing, transiently phosphorylated on a His residue during the reaction cycle. Phosphorylation strongly increases the affinity for substrates and increases the rate of nicotinate D-ribonucleotide production. Dephosphorylation regenerates the low-affinity form of the enzyme, leading to product release.

The catalysed reaction is nicotinate + 5-phospho-alpha-D-ribose 1-diphosphate + ATP + H2O = nicotinate beta-D-ribonucleotide + ADP + phosphate + diphosphate. It participates in cofactor biosynthesis; NAD(+) biosynthesis; nicotinate D-ribonucleotide from nicotinate: step 1/1. Catalyzes the synthesis of beta-nicotinate D-ribonucleotide from nicotinate and 5-phospho-D-ribose 1-phosphate at the expense of ATP. In Bartonella quintana (strain Toulouse) (Rochalimaea quintana), this protein is Nicotinate phosphoribosyltransferase.